The primary structure comprises 71 residues: Long neurotoxin 1 (71 aa).

Intrachain disulfides connect Cys3–Cys20, Cys14–Cys41, Cys26–Cys30, Cys45–Cys56, and Cys57–Cys62.

It belongs to the three-finger toxin family. Long-chain subfamily. Type II alpha-neurotoxin sub-subfamily. As to expression, expressed by the venom gland.

Its subcellular location is the secreted. Functionally, binds with high affinity to muscular (alpha-1/CHRNA1) and neuronal (alpha-7/CHRNA7) nicotinic acetylcholine receptor (nAChR) and inhibits acetylcholine from binding to the receptor, thereby impairing neuromuscular and neuronal transmission. This is Long neurotoxin 1 from Naja nivea (Cape cobra).